The chain runs to 152 residues: Nucleoside diphosphate kinase (152 aa).

ATP is bound by residues Lys11, Phe59, Arg87, Thr93, Arg104, and Asn114. His117 acts as the Pros-phosphohistidine intermediate in catalysis.

Belongs to the NDK family. As to quaternary structure, homotetramer. Requires Mg(2+) as cofactor.

It is found in the cytoplasm. The enzyme catalyses a 2'-deoxyribonucleoside 5'-diphosphate + ATP = a 2'-deoxyribonucleoside 5'-triphosphate + ADP. It catalyses the reaction a ribonucleoside 5'-diphosphate + ATP = a ribonucleoside 5'-triphosphate + ADP. Major role in the synthesis of nucleoside triphosphates other than ATP. The ATP gamma phosphate is transferred to the NDP beta phosphate via a ping-pong mechanism, using a phosphorylated active-site intermediate. This Prochlorococcus marinus (strain AS9601) protein is Nucleoside diphosphate kinase.